A 198-amino-acid chain; its full sequence is Small ribosomal subunit protein uS4z (198 aa).

S68 bears the Phosphoserine mark. Residues 109–180 (RRLQTIVFKS…PGRVKRRNEK (72 aa)) form the S4 RNA-binding domain. The disordered stretch occupies residues 163–198 (TSPFGGGRPGRVKRRNEKSASKKASGGGDADGDDEE).

Belongs to the universal ribosomal protein uS4 family. Binds to the translation initiation factors TIF3E1.

The polypeptide is Small ribosomal subunit protein uS4z (RPS9B) (Arabidopsis thaliana (Mouse-ear cress)).